A 674-amino-acid polypeptide reads, in one-letter code: Zyxin (674 aa).

Residues 35 to 447 (PPKPKVNPFR…PHQDQTSGSQ (413 aa)) form a disordered region. The segment covering 86–109 (LPPPPPNEEPMSPPGSSFPPPPPS) has biased composition (pro residues). The segment covering 110–120 (FGDDGPGSPLG) has biased composition (low complexity). Composition is skewed to pro residues over residues 121-148 (LFPPPPPPEFSEPFPPPIEESFPSPPPL), 162-180 (ASVPPPPPPLPSPPEPAPP), 187-209 (KPAPVLPKPPPPSAFPKPEPPQS), 222-240 (KPSPPSAVAPKPVAPPPVA), and 254-266 (AAPPTHTPAPPAP). 2 stretches are compositionally biased toward basic and acidic residues: residues 328-341 (AKHEAPPPAAKHEA) and 358-387 (QRDKPRVLEKPRANVRDLVPEPPVETRGER). LIM zinc-binding domains are found at residues 481–542 (ELCG…TLEC), 543–600 (CAVC…RRYA), and 601–671 (PRCT…RARA).

The protein belongs to the zyxin/ajuba family. As to quaternary structure, interacts (via LIM2 domain) with hesx1/anf1.

The protein localises to the cytoplasm. It localises to the cytoskeleton. Its subcellular location is the cell junction. The protein resides in the focal adhesion. Adhesion plaque protein. May be a component of a signal transduction pathway that mediates adhesion-stimulated changes in gene expression. Suppresses the transcription-repressing activity of hesx1/anf1. The polypeptide is Zyxin (Xenopus tropicalis (Western clawed frog)).